We begin with the raw amino-acid sequence, 289 residues long: Phycobilisome 39 kDa linker polypeptide, phycocyanin-associated, rod (289 aa).

The region spanning 2–180 is the PBS-linker domain; sequence PITSAASRLG…LYRGYANSDR (179 aa). The disordered stretch occupies residues 213–233; it reads SYLPSKQGTAPSRTFGRSSQG. Positions 216-233 are enriched in polar residues; it reads PSKQGTAPSRTFGRSSQG. Residues 236 to 288 enclose the CpcD-like domain; the sequence is PRLYRIEVTGISLPRYPKVRRSNKEFIVPYEQLSSTLQQINKLGGKVASITFA.

It belongs to the phycobilisome linker protein family.

It localises to the cellular thylakoid membrane. Rod linker protein, associated with phycocyanin. Linker polypeptides determine the state of aggregation and the location of the disk-shaped phycobiliprotein units within the phycobilisome and modulate their spectroscopic properties in order to mediate a directed and optimal energy transfer. This chain is Phycobilisome 39 kDa linker polypeptide, phycocyanin-associated, rod (cpcI2), found in Microchaete diplosiphon (Fremyella diplosiphon).